Reading from the N-terminus, the 432-residue chain is ATP-dependent RNA helicase RhlB (432 aa).

The Q motif motif lies at 9–37 (QNFADLGLQPQVIDGLNAKGFIKCTPIQA). A Helicase ATP-binding domain is found at 40 to 219 (LPVLLAGQDI…FEHMQEPEHV (180 aa)). ATP is bound at residue 53–60 (AQTGTGKT). Positions 165 to 168 (DEAD) match the DEAD box motif. The Helicase C-terminal domain occupies 245-390 (ALLQTLIEEE…QSDYDASALL (146 aa)). Residues 397–432 (LRLQRRPQQNRRNNNGQRQGGNRKHSRPRQPRNTQS) are disordered. Residues 417–426 (GNRKHSRPRQ) show a composition bias toward basic residues.

This sequence belongs to the DEAD box helicase family. RhlB subfamily. Component of the RNA degradosome, which is a multiprotein complex involved in RNA processing and mRNA degradation.

Its subcellular location is the cytoplasm. The enzyme catalyses ATP + H2O = ADP + phosphate + H(+). Its function is as follows. DEAD-box RNA helicase involved in RNA degradation. Has RNA-dependent ATPase activity and unwinds double-stranded RNA. This is ATP-dependent RNA helicase RhlB from Aliivibrio fischeri (strain MJ11) (Vibrio fischeri).